The chain runs to 278 residues: 4-deoxy-L-threo-5-hexosulose-uronate ketol-isomerase (278 aa).

Residues H196, H198, E203, and H245 each coordinate Zn(2+).

Belongs to the KduI family. Zn(2+) serves as cofactor.

The catalysed reaction is 5-dehydro-4-deoxy-D-glucuronate = 3-deoxy-D-glycero-2,5-hexodiulosonate. It functions in the pathway glycan metabolism; pectin degradation; 2-dehydro-3-deoxy-D-gluconate from pectin: step 4/5. Catalyzes the isomerization of 5-dehydro-4-deoxy-D-glucuronate to 3-deoxy-D-glycero-2,5-hexodiulosonate. The sequence is that of 4-deoxy-L-threo-5-hexosulose-uronate ketol-isomerase from Burkholderia cenocepacia (strain ATCC BAA-245 / DSM 16553 / LMG 16656 / NCTC 13227 / J2315 / CF5610) (Burkholderia cepacia (strain J2315)).